A 947-amino-acid polypeptide reads, in one-letter code: Serine-aspartate repeat-containing protein C (947 aa).

The signal sequence occupies residues 1-50 (MNNKKTATNRKGMIPNRLNKFSIRKYSVGTASILVGTTLIFGLSGHEAKA). The tract at residues 51 to 164 (AEHTNGELNQ…STTPKTTTIK (114 aa)) is disordered. The ligand binding A region stretch occupies residues 51 to 495 (AEHTNGELNQ…GSSTANGDQK (445 aa)). Residues 56–71 (GELNQSKNETTAPSEN) show a composition bias toward polar residues. Basic and acidic residues predominate over residues 72-83 (KTTKKVDSRQLK). Over residues 84–155 (DNTQTATADQ…SNLTQAKDVS (72 aa)) the composition is skewed to polar residues. 2 CNA-B domains span residues 496–606 (KYNL…YKTP) and 607–717 (KYSL…EEET). The segment at 678 to 927 (TQTGTNTTED…NNSNNGTLFG (250 aa)) is disordered. Composition is skewed to acidic residues over residues 685 to 695 (TEDDKDADGGE) and 712 to 886 (YYEE…DSDS). Residues 910 to 914 (LPETG) carry the LPXTG sorting signal motif. A compositionally biased stretch (low complexity) spans 912–927 (ETGSENNNSNNGTLFG). Thr913 carries the post-translational modification Pentaglycyl murein peptidoglycan amidated threonine. Positions 914–947 (GSENNNSNNGTLFGGLFAALGSLLLFGRRKKQNK) are cleaved as a propeptide — removed by sortase.

This sequence belongs to the serine-aspartate repeat-containing protein (SDr) family. Homodimerizes; via N2-Domain. Interacts with host NRXN1; this interaction mediates bacterial attachment to host cells.

The protein resides in the secreted. It localises to the cell wall. Cell surface-associated calcium-binding protein which plays an important role in adhesion and pathogenesis. Mediates interactions with components of the extracellular matrix such as host NRXN1 to promote bacterial adhesion. This chain is Serine-aspartate repeat-containing protein C (sdrC), found in Staphylococcus aureus (strain USA300).